The chain runs to 519 residues: Serine/threonine-protein kinase RIO3 (519 aa).

A phosphoserine mark is found at serine 8 and serine 112. Tyrosine 122 is subject to Phosphotyrosine. Residues 122 to 159 (YEDSDSSEDEVDWQDTRDDPYRPAKPIPTPKKGFIGKG) form a disordered region. The segment covering 124–134 (DSDSSEDEVDW) has biased composition (acidic residues). Phosphoserine is present on residues serine 125, serine 127, and serine 128. The 269-residue stretch at 251-519 (ETITGCISTG…DGGPPILYDE (269 aa)) folds into the Protein kinase domain. Residues 257–265 (ISTGKESVV) and lysine 290 contribute to the ATP site. The active-site Proton acceptor is the aspartate 406.

The protein belongs to the protein kinase superfamily. RIO-type Ser/Thr kinase family. As to quaternary structure, interacts with CASP10. Interacts with IRF3; RIOK3 probably mediates the interaction of TBK1 with IRF3. Associated with 40S pre-ribosomal particles. It depends on Mg(2+) as a cofactor. Post-translationally, autophosphorylated (in vitro).

It localises to the cytoplasm. The catalysed reaction is L-seryl-[protein] + ATP = O-phospho-L-seryl-[protein] + ADP + H(+). It carries out the reaction L-threonyl-[protein] + ATP = O-phospho-L-threonyl-[protein] + ADP + H(+). In terms of biological role, involved in regulation of type I interferon (IFN)-dependent immune response which plays a critical role in the innate immune response against DNA and RNA viruses. May act as an adapter protein essential for the recruitment of TBK1 to IRF3. Phosphorylates IFIH1 within the C-terminal region interfering with IFIH1 filament assembly on long dsRNA and resulting in attenuated IFIH1-signaling. Can inhibit CASP10 isoform 7-mediated activation of the NF-kappaB signaling pathway. May play a role in the biogenesis of the 40S ribosomal subunit. Involved in the processing of 21S pre-rRNA to the mature 18S rRNA. This is Serine/threonine-protein kinase RIO3 (RIOK3) from Bos taurus (Bovine).